The following is a 360-amino-acid chain: Protein Wnt-2 (360 aa).

The N-terminal stretch at 1–25 (MNAPLCGIWLWLPLLLTWLTPEVSS) is a signal peptide. 11 cysteine pairs are disulfide-bonded: Cys-76/Cys-87, Cys-127/Cys-135, Cys-137/Cys-157, Cys-206/Cys-220, Cys-208/Cys-215, Cys-278/Cys-309, Cys-294/Cys-304, Cys-308/Cys-348, Cys-324/Cys-339, Cys-326/Cys-336, and Cys-331/Cys-332. The O-palmitoleoyl serine; by PORCN moiety is linked to residue Ser-212. The N-linked (GlcNAc...) asparagine glycan is linked to Asn-295.

Belongs to the Wnt family. Palmitoleoylation is required for efficient binding to frizzled receptors. Depalmitoleoylation leads to Wnt signaling pathway inhibition.

The protein resides in the secreted. It is found in the extracellular space. It localises to the extracellular matrix. Its function is as follows. Ligand for members of the frizzled family of seven transmembrane receptors. Functions in the canonical Wnt signaling pathway that results in activation of transcription factors of the TCF/LEF family. Functions as a upstream regulator of FGF10 expression. Plays an important role in embryonic lung development. May contribute to embryonic brain development by regulating the proliferation of dopaminergic precursors and neurons. The chain is Protein Wnt-2 (WNT2) from Otolemur garnettii (Small-eared galago).